The primary structure comprises 489 residues: Adenylosuccinate synthetase 2, chloroplastic (489 aa).

The N-terminal 45 residues, 1 to 45 (MPFSPPCLDPAAAAAASLSFLPAAAARPPAPCAVAPRSRRALRVA), are a transit peptide targeting the chloroplast. GTP is bound by residues 76–82 (GDEGKGK) and 104–106 (GHT). D77 (proton acceptor) is an active-site residue. 2 residues coordinate Mg(2+): D77 and G104. IMP contacts are provided by residues 77–80 (DEGK), 102–105 (NAGH), T194, R208, Q288, T303, and R367. The active-site Proton donor is the H105. Residue 363–369 (TTTGRPR) coordinates substrate. Residues R369, 395–397 (KLD), and 478–480 (GVG) each bind GTP.

Belongs to the adenylosuccinate synthetase family. As to quaternary structure, homodimer. Mg(2+) serves as cofactor.

Its subcellular location is the plastid. It localises to the chloroplast. The catalysed reaction is IMP + L-aspartate + GTP = N(6)-(1,2-dicarboxyethyl)-AMP + GDP + phosphate + 2 H(+). Its pathway is purine metabolism; AMP biosynthesis via de novo pathway; AMP from IMP: step 1/2. Plays an important role in the de novo pathway and in the salvage pathway of purine nucleotide biosynthesis. Catalyzes the first committed step in the biosynthesis of AMP from IMP. The protein is Adenylosuccinate synthetase 2, chloroplastic of Oryza sativa subsp. japonica (Rice).